An 82-amino-acid chain; its full sequence is M-zodatoxin-Lt3a (82 aa).

The N-terminal stretch at 1-22 is a signal peptide; that stretch reads MKTYAVLLALVVAFVCIAESTG. Positions 23-61 are excised as a propeptide; sequence YPVEDLEDDELTELEAEALLEDLLEDLELEDLDYNEEAR. Positions 58-61 match the Processing quadruplet motif motif; that stretch reads EEAR. Ala-81 is modified (alanine amide).

Belongs to the cationic peptide 03 (latarcin) family. 03 subfamily. In terms of processing, cleavage of the propeptide depends on the processing quadruplet motif (XXXR, with at least one of X being E). As to expression, expressed by the venom gland.

It is found in the secreted. The protein resides in the target cell membrane. In terms of biological role, it has antimicrobial activity against Gram-positive bacteria (A.globiformis VKM Ac-1112 (MIC=0.3 uM), and B.subtilis VKM B-501 (MIC=1.2 uM)), Gram-negative bacteria (E.coli DH5-alpha (MIC=2.5 uM), E.coli MH1 (MIC=6.0 uM), and P.aeruginosa PAO1 (MIC&gt;40 uM)), and yeasts (P.pastoris GS115 (MIC=20 uM), and S.cerevisiae Y190 (MIC=20 uM)). Causes paralysis, but is not lethal when injected into insect (M.domestica) larvae. A second study reports antibacterial activity against E.coli (MIC=100 uM) and S.aureus (MIC=84 uM). Furthermore, increases efficacy of antibiotics (chloramphenicol, streptomycin, kanamycin, novobiocin) when tested against E.coli, probably by facilitating their incorporation into the bacteria. This Lachesana tarabaevi (Spider) protein is M-zodatoxin-Lt3a.